We begin with the raw amino-acid sequence, 136 residues long: uncharacterized protein (136 aa).

The protein resides in the mitochondrion. This is an uncharacterized protein from Arabidopsis thaliana (Mouse-ear cress).